A 345-amino-acid polypeptide reads, in one-letter code: Dihydroorotase (345 aa).

The Zn(2+) site is built by His-13 and His-15. Substrate is bound by residues His-15–Arg-17 and Asn-41. Zn(2+) is bound by residues Lys-98, His-135, and His-173. The residue at position 98 (Lys-98) is an N6-carboxylysine. His-135 serves as a coordination point for substrate. A substrate-binding site is contributed by Leu-218. Asp-246 is a Zn(2+) binding site. The active site involves Asp-246. Substrate contacts are provided by His-250 and Ala-262.

The protein belongs to the metallo-dependent hydrolases superfamily. DHOase family. Class II DHOase subfamily. Homodimer. The cofactor is Zn(2+).

It carries out the reaction (S)-dihydroorotate + H2O = N-carbamoyl-L-aspartate + H(+). It participates in pyrimidine metabolism; UMP biosynthesis via de novo pathway; (S)-dihydroorotate from bicarbonate: step 3/3. Catalyzes the reversible cyclization of carbamoyl aspartate to dihydroorotate. This is Dihydroorotase from Shewanella piezotolerans (strain WP3 / JCM 13877).